The sequence spans 1191 residues: Major DNA-binding protein (1191 aa).

Positions 820 to 821 (FW) match the Required for filament formation motif. 2 disordered regions span residues 1122–1146 (TAAG…AADE) and 1168–1191 (AGLI…RSRL). Gly residues predominate over residues 1127 to 1142 (AAGGGGSATEGGGGGA). Residues 1173–1191 (GDDVRGDDEFELPSKRSRL) are required for nuclear localization.

The protein belongs to the herpesviridae major DNA-binding protein family. As to quaternary structure, homooligomers. Forms double-helical filaments necessary for the formation of replication compartments within the host nucleus. Interacts with the origin-binding protein. Interacts with the helicase primase complex; this interaction stimulates primer synthesis activity of the helicase-primase complex. Interacts with the DNA polymerase. Interacts with the alkaline exonuclease; this interaction increases its nuclease processivity.

It localises to the host nucleus. Single-stranded DNA-binding protein required for DNA replication. Functionally, plays several crucial roles in viral infection. Participates in the opening of the viral DNA origin to initiate replication by interacting with the origin-binding protein. May disrupt loops, hairpins and other secondary structures present on ssDNA to reduce and eliminate pausing of viral DNA polymerase at specific sites during elongation. Promotes viral DNA recombination by performing strand-transfer, characterized by the ability to transfer a DNA strand from a linear duplex to a complementary single-stranded DNA circle. Can also catalyze the renaturation of complementary single strands. Additionally, reorganizes the host cell nucleus, leading to the formation of prereplicative sites and replication compartments. This process is driven by the protein which can form double-helical filaments in the absence of DNA. This chain is Major DNA-binding protein, found in Mus musculus (Mouse).